We begin with the raw amino-acid sequence, 281 residues long: Pantothenate synthetase (281 aa).

Residue 30–37 (MGYLHEGH) participates in ATP binding. H37 functions as the Proton donor in the catalytic mechanism. Q61 is a (R)-pantoate binding site. Q61 contacts beta-alanine. 147 to 150 (GEKD) serves as a coordination point for ATP. Q153 provides a ligand contact to (R)-pantoate. ATP contacts are provided by residues I176 and 184–187 (KSSR).

It belongs to the pantothenate synthetase family. Homodimer.

It is found in the cytoplasm. The catalysed reaction is (R)-pantoate + beta-alanine + ATP = (R)-pantothenate + AMP + diphosphate + H(+). The protein operates within cofactor biosynthesis; (R)-pantothenate biosynthesis; (R)-pantothenate from (R)-pantoate and beta-alanine: step 1/1. Functionally, catalyzes the condensation of pantoate with beta-alanine in an ATP-dependent reaction via a pantoyl-adenylate intermediate. In Clostridium botulinum (strain Loch Maree / Type A3), this protein is Pantothenate synthetase.